The primary structure comprises 424 residues: Histidine--tRNA ligase (424 aa).

Belongs to the class-II aminoacyl-tRNA synthetase family. Homodimer.

It localises to the cytoplasm. The enzyme catalyses tRNA(His) + L-histidine + ATP = L-histidyl-tRNA(His) + AMP + diphosphate + H(+). In Escherichia coli O127:H6 (strain E2348/69 / EPEC), this protein is Histidine--tRNA ligase.